Reading from the N-terminus, the 799-residue chain is 1,4-alpha-glucan-branching enzyme 2, chloroplastic/amyloplastic (799 aa).

A chloroplast-targeting transit peptide spans 1–57 (MAFRVSGAVLGGAVRAPRLTGGGEGSLVFRHTGLFLTRGARVGCSGTHGAMRAAAAA). The (1,4-alpha-D-glucosyl)n site is built by Trp-196 and Lys-232. The active-site Nucleophile is the Asp-447. Glu-502 serves as the catalytic Proton donor.

It belongs to the glycosyl hydrolase 13 family. GlgB subfamily. As to quaternary structure, monomer.

The protein resides in the plastid. It is found in the chloroplast. The protein localises to the amyloplast. The enzyme catalyses Transfers a segment of a (1-&gt;4)-alpha-D-glucan chain to a primary hydroxy group in a similar glucan chain.. Its pathway is glycan biosynthesis; starch biosynthesis. Functionally, catalyzes the formation of the alpha-1,6-glucosidic linkages in starch by scission of a 1,4-alpha-linked oligosaccharide from growing alpha-1,4-glucan chains and the subsequent attachment of the oligosaccharide to the alpha-1,6 position. In Zea mays (Maize), this protein is 1,4-alpha-glucan-branching enzyme 2, chloroplastic/amyloplastic (SBE1).